We begin with the raw amino-acid sequence, 331 residues long: Reticulocalbin-1 (331 aa).

The signal sequence occupies residues 1–29 (MARGGRGRRLGLALGLLLALVLAPRVLRA). Residue N53 is glycosylated (N-linked (GlcNAc...) asparagine). S55 bears the Phosphoserine mark. A Phosphothreonine modification is found at T76. EF-hand domains are found at residues 79 to 114 (ESKERLGKIVDRIDNDGDGFVTTEELKTWIKRVQKR), 115 to 150 (YIFDNVAKVWKDYDRDKDDKISWEEYKQATYGYYLG), 166 to 201 (KMLPRDERRFKAADLNGDLTATREEFTAFLHPEEFE), 203 to 238 (MKEIVVLETLEDIDKNGDGFVDQDEYIADMFSHEEN), 244 to 279 (WVLSEREQFNEFRDLNKDGKLDKDEIRHWILPQDYD), and 280 to 315 (HAQAEARHLVYESDKNKDEKLTKEEILENWNMFVGS). S80 carries the phosphoserine; by FAM20C modification. Residues D92, D94, D96, E103, D128, D130, D132, K134, E139, D179, N181, D183, T185, E190, D216, N218, D220, E227, D257, N259, D261, K263, E268, D293, N295, D297, K299, and E304 each coordinate Ca(2+). The Prevents secretion from ER motif lies at 328–331 (HDEL).

Belongs to the CREC family. In terms of processing, O-glycosylated. O-mannosylated by POMT1 and POMT2 and elongated by POMGNT1.

Its subcellular location is the endoplasmic reticulum lumen. May regulate calcium-dependent activities in the endoplasmic reticulum lumen or post-ER compartment. This Homo sapiens (Human) protein is Reticulocalbin-1 (RCN1).